The primary structure comprises 547 residues: CTP synthase (547 aa).

Residues 1 to 265 (MTKFVFVTGG…DRIVCEKLAL (265 aa)) form an amidoligase domain region. Ser13 lines the CTP pocket. Ser13 contributes to the UTP binding site. ATP is bound by residues 14–19 (SLGKGI) and Asp71. Mg(2+) is bound by residues Asp71 and Glu139. CTP is bound by residues 146–148 (DIE), 186–191 (KTKPTQ), and Lys222. UTP is bound by residues 186–191 (KTKPTQ) and Lys222. Residues 290–542 (TIGMVGKYVD…IKAALAHKHA (253 aa)) form the Glutamine amidotransferase type-1 domain. An L-glutamine-binding site is contributed by Gly351. The Nucleophile; for glutamine hydrolysis role is filled by Cys378. Residues 379–382 (LGMQ), Glu402, and Arg468 each bind L-glutamine. Residues His515 and Glu517 contribute to the active site.

This sequence belongs to the CTP synthase family. Homotetramer.

It carries out the reaction UTP + L-glutamine + ATP + H2O = CTP + L-glutamate + ADP + phosphate + 2 H(+). It catalyses the reaction L-glutamine + H2O = L-glutamate + NH4(+). The catalysed reaction is UTP + NH4(+) + ATP = CTP + ADP + phosphate + 2 H(+). It participates in pyrimidine metabolism; CTP biosynthesis via de novo pathway; CTP from UDP: step 2/2. Allosterically activated by GTP, when glutamine is the substrate; GTP has no effect on the reaction when ammonia is the substrate. The allosteric effector GTP functions by stabilizing the protein conformation that binds the tetrahedral intermediate(s) formed during glutamine hydrolysis. Inhibited by the product CTP, via allosteric rather than competitive inhibition. Its function is as follows. Catalyzes the ATP-dependent amination of UTP to CTP with either L-glutamine or ammonia as the source of nitrogen. Regulates intracellular CTP levels through interactions with the four ribonucleotide triphosphates. This is CTP synthase from Janthinobacterium sp. (strain Marseille) (Minibacterium massiliensis).